The following is a 229-amino-acid chain: Choline-phosphate cytidylyltransferase (229 aa).

CDP-choline contacts are provided by leucine 6, alanine 8, glycine 9, tyrosine 80, asparagine 82, serine 85, and alanine 101. Aspartate 102 contacts Mg(2+). Position 185 (tyrosine 185) interacts with CDP-choline. Residues glutamate 211 and aspartate 213 each contribute to the Mg(2+) site.

This sequence belongs to the LicC/PntC cytidylyltransferase family. Monomer. Forms dimers in LicC-CDP-Cho-Mg(2+) crystals, but the monomer is probably the biologically functional unit. Mg(2+) serves as cofactor.

It carries out the reaction phosphocholine + CTP + H(+) = CDP-choline + diphosphate. It functions in the pathway cell wall biogenesis; teichoic acid biosynthesis. The protein operates within cell wall biogenesis; lipoteichoic acid biosynthesis. Mg(2+) in slight excess of CTP gives maximal activity. Strongly inhibited by Ca(2+) and several other metal ions, such as Cd(2+), Co(2+), Cu(2+), Mn(2+), Ni(2+), Zn(2+) and Fe(2+). Also inhibited by Mg(2+) at high concentrations. CDP-Cho is a competitive inhibitor with respect to CTP, whereas diphosphate is a mixed-type inhibitor with respect to CTP. Functionally, cytidylyltransferase involved in the biosynthesis of the phosphocholine containing cell wall constituents, teichoic acid and lipoteichoic acid, which are essential for cell separation and pathogenesis. Catalyzes the activation of phosphocholine (P-Cho) to CDP-choline (CDP-Cho). Can also use phosphoethanolamine and 2-aminoethylphosphonate, with much lower efficiency. Shows lower activity with dCTP, weak activity with ATP and no activity with GTP, TTP, UTP, dATP, dGTP and dTTP. This is Choline-phosphate cytidylyltransferase from Streptococcus pneumoniae (strain ATCC BAA-255 / R6).